We begin with the raw amino-acid sequence, 307 residues long: Pseudouridine-5'-phosphate glycosidase (307 aa).

Residue E28 is the Proton donor of the active site. Substrate is bound by residues K89 and V109. Position 141 (D141) interacts with Mn(2+). 143 to 145 contributes to the substrate binding site; that stretch reads SAD. K162 serves as the catalytic Nucleophile.

Belongs to the pseudouridine-5'-phosphate glycosidase family. In terms of assembly, homotrimer. Mn(2+) serves as cofactor.

It catalyses the reaction D-ribose 5-phosphate + uracil = psi-UMP + H2O. Functionally, catalyzes the reversible cleavage of pseudouridine 5'-phosphate (PsiMP) to ribose 5-phosphate and uracil. Functions biologically in the cleavage direction, as part of a pseudouridine degradation pathway. The chain is Pseudouridine-5'-phosphate glycosidase from Nocardioides sp. (strain ATCC BAA-499 / JS614).